The primary structure comprises 450 residues: Probable galactarate/D-glucarate transporter GudP (450 aa).

The Cytoplasmic portion of the chain corresponds to 1–20 (MSSLSQAASSVEKRTNARYW). A helical transmembrane segment spans residues 21-41 (IVVMLFIVTSFNYGDRATLSI). Residues 42 to 58 (AGSEMAKDIGLDPVGMG) are Periplasmic-facing. Residues 59-79 (YVFSAFSWAYVIGQIPGGWLL) traverse the membrane as a helical segment. Over 80–85 (DRFGSK) the chain is Cytoplasmic. The helical transmembrane segment at 86–105 (RVYFWSIFIWSMFTLLQGFV) threads the bilayer. Topologically, residues 106 to 109 (DIFS) are periplasmic. Residues 110–132 (GFGIIVALFTLRFLVGLAEAPSF) form a helical membrane-spanning segment. Over 133–153 (PGNSRIVAAWFPAQERGTAVS) the chain is Cytoplasmic. A helical membrane pass occupies residues 154–174 (IFNSAQYFATVIFAPIMGWLT). Residues 175–176 (HE) are Periplasmic-facing. Residues 177-197 (VGWSHVFFFMGGLGIVISFIW) form a helical membrane-spanning segment. Residues 198–254 (LKVIHEPNQHPGVNKKELEYIAAGGALINMDQQNTKVKVPFSVKWGQIKQLLGSRMM) lie on the Cytoplasmic side of the membrane. A helical membrane pass occupies residues 255-275 (IGVYIGQYCINALTYFFITWF). The Periplasmic segment spans residues 276-290 (PVYLVQARGMSILKA). Residues 291–311 (GFVASVPAVCGFIGGVLGGII) traverse the membrane as a helical segment. Topologically, residues 312–329 (SDWLMRRTGSLNIARKTP) are cytoplasmic. Residues 330-350 (IVMGMLLSMVMVFCNYVNVEW) form a helical membrane-spanning segment. Met351 is a topological domain (periplasmic). The helical transmembrane segment at 352 to 372 (IIGFMALAFFGKGIGALGWAV) threads the bilayer. The Cytoplasmic segment spans residues 373–387 (MADTAPKEISGLSGG). The chain crosses the membrane as a helical span at residues 388–408 (LFNMFGNISGIVTPIAIGYIV). Residues 409-415 (GTTGSFN) are Periplasmic-facing. A helical transmembrane segment spans residues 416-436 (GALIYVGVHALIAVLSYLVLV). The Cytoplasmic portion of the chain corresponds to 437–450 (GDIKRIELKPVAGQ).

The protein belongs to the major facilitator superfamily. Phthalate permease family.

It is found in the cell inner membrane. The catalysed reaction is galactarate(in) + H(+)(in) = galactarate(out) + H(+)(out). The enzyme catalyses D-glucarate(in) + H(+)(in) = D-glucarate(out) + H(+)(out). It catalyses the reaction (R)-glycerate(in) + H(+)(in) = (R)-glycerate(out) + H(+)(out). Its function is as follows. Probably involved in the uptake of galactarate and/or D-glucarate. May also transport D-glycerate. In Escherichia coli (strain K12), this protein is Probable galactarate/D-glucarate transporter GudP.